The sequence spans 103 residues: Small ribosomal subunit protein uS10 (103 aa).

The protein belongs to the universal ribosomal protein uS10 family. Part of the 30S ribosomal subunit.

Functionally, involved in the binding of tRNA to the ribosomes. The polypeptide is Small ribosomal subunit protein uS10 (Actinobacillus pleuropneumoniae serotype 5b (strain L20)).